A 311-amino-acid polypeptide reads, in one-letter code: Methionyl-tRNA formyltransferase (311 aa).

A (6S)-5,6,7,8-tetrahydrofolate-binding site is contributed by 112 to 115 (SLLP).

This sequence belongs to the Fmt family.

It catalyses the reaction L-methionyl-tRNA(fMet) + (6R)-10-formyltetrahydrofolate = N-formyl-L-methionyl-tRNA(fMet) + (6S)-5,6,7,8-tetrahydrofolate + H(+). Attaches a formyl group to the free amino group of methionyl-tRNA(fMet). The formyl group appears to play a dual role in the initiator identity of N-formylmethionyl-tRNA by promoting its recognition by IF2 and preventing the misappropriation of this tRNA by the elongation apparatus. The chain is Methionyl-tRNA formyltransferase from Rhizobium leguminosarum bv. trifolii (strain WSM2304).